Here is a 275-residue protein sequence, read N- to C-terminus: Large ribosomal subunit protein uL2 (275 aa).

Residues 222–275 (GVAMNPVDHPHGGGEGRNKGRHPTSPWGQKSKGLKTRNNKRTDSMIIRRRAKKK) form a disordered region. The segment covering 229 to 239 (DHPHGGGEGRN) has biased composition (basic and acidic residues).

This sequence belongs to the universal ribosomal protein uL2 family. In terms of assembly, part of the 50S ribosomal subunit. Forms a bridge to the 30S subunit in the 70S ribosome.

One of the primary rRNA binding proteins. Required for association of the 30S and 50S subunits to form the 70S ribosome, for tRNA binding and peptide bond formation. It has been suggested to have peptidyltransferase activity; this is somewhat controversial. Makes several contacts with the 16S rRNA in the 70S ribosome. The protein is Large ribosomal subunit protein uL2 of Psychrobacter arcticus (strain DSM 17307 / VKM B-2377 / 273-4).